The sequence spans 239 residues: Ribonuclease PH (239 aa).

Phosphate-binding positions include arginine 86 and 124–126 (GTR).

The protein belongs to the RNase PH family. Homohexameric ring arranged as a trimer of dimers.

The enzyme catalyses tRNA(n+1) + phosphate = tRNA(n) + a ribonucleoside 5'-diphosphate. Functionally, phosphorolytic 3'-5' exoribonuclease that plays an important role in tRNA 3'-end maturation. Removes nucleotide residues following the 3'-CCA terminus of tRNAs; can also add nucleotides to the ends of RNA molecules by using nucleoside diphosphates as substrates, but this may not be physiologically important. Probably plays a role in initiation of 16S rRNA degradation (leading to ribosome degradation) during starvation. The protein is Ribonuclease PH of Cupriavidus necator (strain ATCC 17699 / DSM 428 / KCTC 22496 / NCIMB 10442 / H16 / Stanier 337) (Ralstonia eutropha).